Here is a 272-residue protein sequence, read N- to C-terminus: Deaminated glutathione amidase (272 aa).

In terms of domain architecture, CN hydrolase spans 1-253; it reads MKPYLAAALQ…PGLAIAEINP (253 aa). Glutamate 43 functions as the Proton acceptor in the catalytic mechanism. Residue lysine 115 is the Proton donor of the active site. Catalysis depends on cysteine 158, which acts as the Nucleophile.

This sequence belongs to the carbon-nitrogen hydrolase superfamily. NIT1/NIT2 family.

It carries out the reaction N-(4-oxoglutaryl)-L-cysteinylglycine + H2O = L-cysteinylglycine + 2-oxoglutarate. Its function is as follows. Hydrolyzes deaminated glutathione (dGSH, 2-oxoglutaramate) to alpha-ketoglutarate (alpha-KG) and cysteinylglycine (specific activity 7.77 umol/min/mg), hydrolyzes alpha-ketoglutaramate (a-KGM, specific activity 2.13 umol/min/mg), has no activity on glutathione or L-glutamine. May function as a metabolite repair enzyme. This Synechocystis sp. (strain PCC 6803 / GT-S) protein is Deaminated glutathione amidase.